A 325-amino-acid chain; its full sequence is Melanocortin receptor 5 (325 aa).

Topologically, residues 1-37 (MNSSFHLHFLDLGLNATEGNLSGLSVRNASSPCEDMG) are extracellular. N-linked (GlcNAc...) asparagine glycosylation is found at Asn-2, Asn-15, Asn-20, and Asn-28. A helical membrane pass occupies residues 38–61 (IAVEVFLALGLISLLENILVIGAI). The Cytoplasmic portion of the chain corresponds to 62–73 (VRNRNLHIPMYF). The helical transmembrane segment at 74-97 (FVGSLAVADMLVSLSNFWETITIY) threads the bilayer. Residues 98-114 (LLTNKHLVMADASVRHL) are Extracellular-facing. A helical transmembrane segment spans residues 115–138 (DNVFDSMICISVVASMCSLLAIAV). At 139-155 (DRYVTIFCRLRYQRIMT) the chain is on the cytoplasmic side. A helical membrane pass occupies residues 156 to 179 (GRRSGAIIAGIWAFCTSCGTVFIV). The Extracellular segment spans residues 180-186 (YYESTYV). Residues 187 to 211 (VVCLIAMFLTMLLLMASLYTHMFLL) traverse the membrane as a helical segment. Over 212–239 (ARTHVRRIAALPGHSSVRQRTGVKGAIT) the chain is Cytoplasmic. A helical transmembrane segment spans residues 240 to 265 (LAMLLGVFIICWAPFFLHLILMISCP). At 266 to 273 (QNLYCSCF) the chain is on the extracellular side. The chain crosses the membrane as a helical span at residues 274 to 297 (MSHFNMYLILIMCNSVIDPLIYAF). Residues 298–325 (RSQEMRKTFKEIVCFQGFRTPCRFPSTY) lie on the Cytoplasmic side of the membrane. The S-palmitoyl cysteine moiety is linked to residue Cys-311.

The protein belongs to the G-protein coupled receptor 1 family.

Its subcellular location is the cell membrane. Its function is as follows. Receptor for MSH (alpha, beta and gamma) and ACTH. The activity of this receptor is mediated by G proteins which activate adenylate cyclase. This receptor is a possible mediator of the immunomodulation properties of melanocortins. This chain is Melanocortin receptor 5 (MC5R), found in Ovis aries (Sheep).